We begin with the raw amino-acid sequence, 209 residues long: ATP-dependent Clp protease proteolytic subunit 1 (209 aa).

Residue Ser-109 is the Nucleophile of the active site. Residue His-134 is part of the active site.

The protein belongs to the peptidase S14 family. Fourteen ClpP subunits assemble into 2 heptameric rings which stack back to back to give a disk-like structure with a central cavity, resembling the structure of eukaryotic proteasomes.

It localises to the cytoplasm. It catalyses the reaction Hydrolysis of proteins to small peptides in the presence of ATP and magnesium. alpha-casein is the usual test substrate. In the absence of ATP, only oligopeptides shorter than five residues are hydrolyzed (such as succinyl-Leu-Tyr-|-NHMec, and Leu-Tyr-Leu-|-Tyr-Trp, in which cleavage of the -Tyr-|-Leu- and -Tyr-|-Trp bonds also occurs).. In terms of biological role, cleaves peptides in various proteins in a process that requires ATP hydrolysis. Has a chymotrypsin-like activity. Plays a major role in the degradation of misfolded proteins. In Corynebacterium diphtheriae (strain ATCC 700971 / NCTC 13129 / Biotype gravis), this protein is ATP-dependent Clp protease proteolytic subunit 1.